Reading from the N-terminus, the 179-residue chain is Protein TIFY 11a (179 aa).

A Tify domain is found at V62–A97. Positions P115–Y140 match the Jas motif. A Nuclear localization signal motif is present at residues A117–R124.

It belongs to the TIFY/JAZ family. Interacts with BHLH148. Interacts with COI1A in a coronatine-dependent manner. Interacts with COI1B in a coronatine-dependent manner. Coronatine is an analog of jasmonoyl isoleucine (JA-Ile). Interacts with RSS3. Forms a ternary complex with RSS3 and BHLH094 in the nucleus. Interacts with BHLH062 and NINJA1. Interacts with MYB30. Post-translationally, ubiquitinated. Targeted for degradation by the SCF(COI1) E3 ubiquitin ligase-proteasome pathway during jasmonate signaling.

Its subcellular location is the nucleus. In terms of biological role, repressor of jasmonate (JA) responses. Forms a ternary complex with RSS3 and BHLH94 to negatively regulate JA-responsive genes. Acts as a positive regulator of tolerance to salt stress. Involved in salt tolerance by modulating potassium homeostasis through JA signaling and regulation of the expression of potassium ion transporter genes. Acts as a transcriptional regulator targeted by the SCF(COI1) E3 ubiquitin ligase complexes in the JA signaling pathway, and interacts with BHLH062 that may directly regulate the ion transporter genes. Acts as a positive regulator of tolerance to dehydration stress. Acts as a negative regulator of tolerance to cold stress by interacting with MYB30. The polypeptide is Protein TIFY 11a (Oryza sativa subsp. japonica (Rice)).